Reading from the N-terminus, the 161-residue chain is V-type proton ATPase 16 kDa proteolipid subunit c 2 (161 aa).

The Lumenal segment spans residues Met-1–Pro-15. The helical transmembrane segment at Phe-16–Gly-36 threads the bilayer. Residues Thr-37 to Ser-58 are Cytoplasmic-facing. The helical transmembrane segment at Val-59 to Leu-79 threads the bilayer. Over Lys-80 to His-98 the chain is Lumenal. The helical transmembrane segment at Leu-99–Val-119 threads the bilayer. Topologically, residues Gly-120 to Met-137 are cytoplasmic. The chain crosses the membrane as a helical span at residues Ile-138–Leu-158. Residues Gly-159 to Ser-161 lie on the Lumenal side of the membrane.

This sequence belongs to the V-ATPase proteolipid subunit family. As to quaternary structure, V-ATPase is a heteromultimeric enzyme made up of two complexes: the ATP-hydrolytic V1 complex and the proton translocation V0 complex. The V1 complex consists of three catalytic AB heterodimers that form a heterohexamer, three peripheral stalks each consisting of EG heterodimers, one central rotor including subunits D and F, and the regulatory subunits C and H. The proton translocation complex V0 consists of the proton transport subunit a, a ring of proteolipid subunits c9c'', rotary subunit d, subunits e and f, and the accessory subunits vah-19/Ac45 and vah-20/PRR. Expressed in the H-shaped excretory cell, rectum, and a pair of cells posterior to the anus.

It is found in the membrane. Proton-conducting pore forming subunit of the V0 complex of vacuolar(H+)-ATPase (V-ATPase), a multisubunit enzyme composed of a peripheral complex (V1) that hydrolyzes ATP and a membrane integral complex (V0) that translocates protons. V-ATPase is responsible for acidifying and maintaining the pH of intracellular compartments and in some cell types, is targeted to the plasma membrane, where it is responsible for acidifying the extracellular environment. Involved in necrotic cell death. Required along with other vacuolar ATPase components for the removal of protein aggregates which form in immature oocytes in the distal gonad. This removal occurs as the oocytes mature and move to the proximal gonad, is triggered by the introduction of sperm through mating and occurs before fertilization. The introduction of sperm triggers V-ATPase accumulation in proximal oocytes and induces lysosomal acidification which leads to engulfing of protein aggregates by lysosomes and subsequent clearance of the aggregates. Lysosomal acidification also leads to changes in mitochondrial morphology and function. Mitochondria in distal immature oocytes are fragmented, produce high levels of reactive oxygen species (ROS) and have high membrane potential, indicative of metabolic inactivity. In contrast, mitochondria in proximal mature oocytes are tubular with lower ROS levels and membrane potential, indicative of an active metabolic state required for aggregate mobilization before clearance. The protein is V-type proton ATPase 16 kDa proteolipid subunit c 2 of Caenorhabditis elegans.